A 491-amino-acid chain; its full sequence is UDP-N-acetylmuramate--L-alanine ligase (491 aa).

126 to 132 lines the ATP pocket; sequence GTHGKTT.

The protein belongs to the MurCDEF family.

It localises to the cytoplasm. The enzyme catalyses UDP-N-acetyl-alpha-D-muramate + L-alanine + ATP = UDP-N-acetyl-alpha-D-muramoyl-L-alanine + ADP + phosphate + H(+). The protein operates within cell wall biogenesis; peptidoglycan biosynthesis. Cell wall formation. The polypeptide is UDP-N-acetylmuramate--L-alanine ligase (Escherichia coli (strain SMS-3-5 / SECEC)).